The primary structure comprises 155 residues: MLKKKKTEVYALGEHISMSADKARRVIDQIRGRSYEETLMILELMPYRACYPILKLVYSAAANASYNMGSSEANLVISKAEVNGGTTVKKLKPRARGRSFPIKRSTCHITIVMKDISLDDEYVEMYSLKKTRWKKKPTAMPYRDMYNSGGLWDKK.

It belongs to the universal ribosomal protein uL22 family. As to quaternary structure, part of the 50S ribosomal subunit.

The protein localises to the plastid. It localises to the chloroplast. This protein binds specifically to 23S rRNA. Its function is as follows. The globular domain of the protein is located near the polypeptide exit tunnel on the outside of the subunit, while an extended beta-hairpin is found that lines the wall of the exit tunnel in the center of the 70S ribosome. The chain is Large ribosomal subunit protein uL22c (rpl22) from Nicotiana tomentosiformis (Tobacco).